The sequence spans 75 residues: Small ribosomal subunit protein bS18c (75 aa).

It belongs to the bacterial ribosomal protein bS18 family. In terms of assembly, part of the 30S ribosomal subunit.

The protein resides in the plastid. It localises to the chloroplast. This chain is Small ribosomal subunit protein bS18c, found in Psilotum nudum (Whisk fern).